Reading from the N-terminus, the 676-residue chain is MIKSEEASDRSVMTMDQLGGYYHDPRAHPPFSHPHAHSHPHQHTHTGHPYRAGNLLTGGNYQAMGGGESPTELIDEKPNIGYMELKHYMDATPTATPVSAAQHYSLSALHSMGTPPASSSPIPPYGVLMTAHSAGSASPQSNSKTPTDLPQDLQYASSSTSTAKVQPLQVQLQPLNHQYASTIKYCSNNTILSANDYQLLTSQEQAGQQQPQQLPAQQLQHSPGGGYMSRISTSPSQVISNAHGMPVLNYSSSSSSPAKSLNGSESSPPSQNHLENKVSGSAVVGTGGSSQQDAPSTPDTTKKSGTRRPEKPALSYINMIGHAIKESPTGKLTLSEIYAYLQKSYEFFRGPYVGWKNSVRHNLSLNECFKKLPKGMGVGKPGKGNYWTIDENSAHLFEDEGSLRRRPRGYRSKIKVKPYAGHANGYYASGYGDAGMDNGNYYASPAFASYDYSAAGATGVSPAGGQGFADPWNAHAAHSGSSSVGVGMGVGPLPQYTNISCLAAGGNVNGSATTPPLAHSALGMAPSASSSSSPLGAAATLQSDYAPTASLVAAGYSYATSAGSLDNGLRSISLQQLPGLSSIQHAQAQAQAQAHHHHHQHHASHPSHSHQGHGSMHQNHGTSSTTPPPSQSGGSHGIDHSPIDRKPAYLPPISPPPMMVALNGGGGYYEGLKYAN.

Disordered regions lie at residues 22–50 (YHDPRAHPPFSHPHAHSHPHQHTHTGHPY), 131–160 (AHSAGSASPQSNSKTPTDLPQDLQYASSST), 203–232 (QEQAGQQQPQQLPAQQLQHSPGGGYMSRIS), 249–312 (NYSS…PEKP), and 583–651 (IQHA…AYLP). A compositionally biased stretch (basic residues) spans 34-48 (PHAHSHPHQHTHTGH). Over residues 133 to 160 (SAGSASPQSNSKTPTDLPQDLQYASSST) the composition is skewed to polar residues. Low complexity predominate over residues 203–220 (QEQAGQQQPQQLPAQQLQ). Polar residues predominate over residues 257–273 (PAKSLNGSESSPPSQNH). Residues 311–408 (KPALSYINMI…DEGSLRRRPR (98 aa)) constitute a DNA-binding region (fork-head). Low complexity predominate over residues 583 to 593 (IQHAQAQAQAQ). Residues 594 to 611 (AHHHHHQHHASHPSHSHQ) are compositionally biased toward basic residues. The span at 612-625 (GHGSMHQNHGTSST) shows a compositional bias: low complexity. Positions 637–647 (GIDHSPIDRKP) are enriched in basic and acidic residues.

In terms of assembly, binds to DNA. In embryo, expressed in all types of visceral muscles and their progenitors (at protein level). In late stage 10 embryo, expressed in the caudal visceral mesoderm and trunk and hindgut visceral mesoderm progenitors.

It is found in the nucleus. Its function is as follows. Component of a regulatory network controlling visceral mesoderm development and midgut morphogenesis. Transcriptional regulator involved in the activation of a large number of genes in the visceral mesoderm including betaTub60D, dpp and Hand. Binds to and regulates a number of enhancers driving expression in the visceral mesoderm in a temporally and spatially restricted manner. Also to binds to enhancers cooperatively with activators, such as bap or HLH54F, to coregulate expression of shared target genes in the visceral mesoderm. Binds to the Ndg enhancer and drives expression of Ndg in the late visceral musculature. May be involved in the transcriptional regulation of wupA in the visceral mesoderm. Plays an indirect role in the later stages of salivary gland positioning. The sequence is that of Forkhead box protein biniou (bin) from Drosophila melanogaster (Fruit fly).